A 420-amino-acid chain; its full sequence is Protein translocase subunit SecF (420 aa).

The next 6 helical transmembrane spans lie at 7–27 (FSLLFLPCAILSVVLIGAGVL), 250–270 (LLVRQALLLVLGALVLIFLYV), 276–296 (WFFALGAIVALVHDACIMVSF), 309–327 (IAAILTIIGYSINDTVVVF), 358–378 (VVTTVTTLLAALMLYVFTEGG), and 388–408 (VGMVSGVYSTIYIAGGCIALI).

Belongs to the SecD/SecF family. SecF subfamily. As to quaternary structure, forms a complex with SecD. Part of the essential Sec protein translocation apparatus which comprises SecA, SecYEG and auxiliary proteins SecDF. Other proteins may also be involved.

It localises to the cell inner membrane. Functionally, part of the Sec protein translocase complex. Interacts with the SecYEG preprotein conducting channel. SecDF uses the proton motive force (PMF) to complete protein translocation after the ATP-dependent function of SecA. The sequence is that of Protein translocase subunit SecF from Treponema pallidum (strain Nichols).